The chain runs to 923 residues: Neuropilin-1 (923 aa).

The N-terminal stretch at 1 to 21 (MERGLPLLCATLALALALAGA) is a signal peptide. At 22–856 (FRSDKCGGTI…PGNVLKTLDP (835 aa)) the chain is on the extracellular side. Cystine bridges form between Cys27-Cys54, Cys82-Cys104, and Cys147-Cys173. CUB domains follow at residues 27–141 (CGGT…YEIF) and 147–265 (CSQN…YSVL). Asn150 carries an N-linked (GlcNAc...) asparagine glycan. Residues Glu195, Asp209, and Asp250 each contribute to the Ca(2+) site. The cysteines at positions 206 and 228 are disulfide-linked. Residues Asn261, Asn300, and Asn522 are each glycosylated (N-linked (GlcNAc...) asparagine). Cystine bridges form between Cys275–Cys424 and Cys431–Cys583. F5/8 type C domains are found at residues 275-424 (CMEA…VYGC) and 431-583 (CSGM…LLGC). Ser612 carries an O-linked (Xyl...) (chondroitin sulfate) serine; alternate glycan. An O-linked (Xyl...) (heparan sulfate) serine; alternate glycan is attached at Ser612. One can recognise an MAM domain in the interval 645–811 (TYGFNCEFGW…NHISQEDCAK (167 aa)). Residues 820-845 (TEIKIDETGSTPGYEGEGEGDKNISR) are disordered. O-linked (Xyl...) (chondroitin sulfate) serine glycosylation occurs at Ser829. Residue Asn842 is glycosylated (N-linked (GlcNAc...) asparagine). A helical membrane pass occupies residues 857 to 879 (ILITIIAMSALGVLLGAVCGVVL). The Cytoplasmic segment spans residues 880-923 (YCACWHNGMSERNLSALENYNFELVDGVKLKKDKLNPQSNYSEA). Ser894 bears the Phosphoserine mark.

It belongs to the neuropilin family. Homodimer, and heterodimer with NRP2. Binds PLXNB1. Interacts with FER. Interacts with VEGFA. Interacts with ABCB8/MITOSUR in mitochondria. In terms of tissue distribution, nervous system.

It is found in the mitochondrion membrane. It localises to the cell membrane. The protein localises to the cytoplasm. Its function is as follows. Receptor involved in the development of the cardiovascular system, in angiogenesis, in the formation of certain neuronal circuits and in organogenesis outside the nervous system. Mediates the chemorepulsant activity of semaphorins. Recognizes a C-end rule (CendR) motif R/KXXR/K on its ligands which causes cellular internalization and vascular leakage. Binds to semaphorin 3A (SEMA3A), the PLGF-2 isoform of PGF, the VEGF165 isoform of VEGFA and VEGFB. Coexpression with KDR results in increased VEGF165 binding to KDR as well as increased chemotaxis. Regulates VEGF-induced angiogenesis. Binding to VEGFA initiates a signaling pathway needed for motor neuron axon guidance and cell body migration, including for the caudal migration of facial motor neurons from rhombomere 4 to rhombomere 6 during embryonic development. Regulates mitochondrial iron transport via interaction with ABCB8/MITOSUR. This is Neuropilin-1 from Mus musculus (Mouse).